Consider the following 395-residue polypeptide: Carbohydrate sulfotransferase 5 (395 aa).

Residues 1–7 (MRLPRFS) are Cytoplasmic-facing. Residues 8 to 26 (STVMLSLLMVQTGILVFLV) traverse the membrane as a helical; Signal-anchor for type II membrane protein segment. Topologically, residues 27–395 (SRQVPSSPAG…ASSTEKQPES (369 aa)) are lumenal. 3'-phosphoadenylyl sulfate is bound at residue 49 to 55 (WRSGSSF). Residues Asn-116 and Asn-142 are each glycosylated (N-linked (GlcNAc...) asparagine). 202-210 (RDPRAVLRS) lines the 3'-phosphoadenylyl sulfate pocket. N-linked (GlcNAc...) asparagine glycosylation is found at Asn-229 and Asn-305.

The protein belongs to the sulfotransferase 1 family. Gal/GlcNAc/GalNAc subfamily. In terms of tissue distribution, expressed in cornea.

It is found in the golgi apparatus membrane. Sulfotransferase that utilizes 3'-phospho-5'-adenylyl sulfate (PAPS) as sulfonate donor to catalyze the transfer of sulfate to position 6 of non-reducing N-acetylglucosamine (GlcNAc) residues of keratan. Mediates sulfation of keratan in cornea. Keratan sulfate plays a central role in maintaining corneal transparency. Acts on the non-reducing terminal GlcNAc of short and long carbohydrate substrates that have poly-N-acetyllactosamine structures. May also have activity toward O-linked sugars of mucin-type acceptors. The protein is Carbohydrate sulfotransferase 5 (Chst5) of Mus musculus (Mouse).